The chain runs to 872 residues: Alanine--tRNA ligase (872 aa).

Zn(2+) contacts are provided by H566, H570, C668, and H672.

This sequence belongs to the class-II aminoacyl-tRNA synthetase family. Zn(2+) serves as cofactor.

It is found in the cytoplasm. It carries out the reaction tRNA(Ala) + L-alanine + ATP = L-alanyl-tRNA(Ala) + AMP + diphosphate. Catalyzes the attachment of alanine to tRNA(Ala) in a two-step reaction: alanine is first activated by ATP to form Ala-AMP and then transferred to the acceptor end of tRNA(Ala). Also edits incorrectly charged Ser-tRNA(Ala) and Gly-tRNA(Ala) via its editing domain. In Lactococcus lactis subsp. cremoris (strain MG1363), this protein is Alanine--tRNA ligase.